Here is a 311-residue protein sequence, read N- to C-terminus: Thioredoxin reductase (311 aa).

35 to 42 (ERGIPGGQ) is a binding site for FAD. An intrachain disulfide couples Cys-134 to Cys-137. 277 to 286 (DVRDKGLRQI) serves as a coordination point for FAD.

This sequence belongs to the class-II pyridine nucleotide-disulfide oxidoreductase family. Homodimer. FAD is required as a cofactor.

It localises to the cytoplasm. The catalysed reaction is [thioredoxin]-dithiol + NADP(+) = [thioredoxin]-disulfide + NADPH + H(+). This is Thioredoxin reductase (trxB) from Staphylococcus aureus (strain COL).